Consider the following 117-residue polypeptide: Gamma-aminobutyric acid receptor-associated protein-like 2 (117 aa).

K24 is modified (N6-acetyllysine). 3 positions are modified to phosphoserine: S39, S87, and S88. The Phosphatidylethanolamine amidated glycine; alternate moiety is linked to residue G116. G116 carries the Phosphatidylserine amidated glycine; alternate lipid modification. F117 is a propeptide (removed in mature form).

The protein belongs to the ATG8 family. As to quaternary structure, monomer. Interacts with ATG3, ATG7, ATG13 and ULK1. Interacts with TP53INP1 and TP53INP2. Interacts with TBC1D25. Directly interacts with SQSTM1 and BNIP3. Interacts with TECPR2 and PCM1. Interacts with TBC1D5. Interacts with TRIM5. Interacts with MEFV and TRIM21. Interacts with WDFY3. Interacts with UBA5; promoting recruitment of UBA5 to the endoplasmic reticulum membrane. Interacts with GOSR1. Interacts with KBTBD6 and KBTBD7; the interaction is direct. Interacts with reticulophagy regulators RETREG1, RETREG2 and RETREG3. Interacts with IRGM. Interacts with DNM2. Interacts with NCOA4. Interacts with IRGQ. In terms of processing, the precursor molecule is cleaved by ATG4 (ATG4A, ATG4B, ATG4C or ATG4D) to expose the glycine at the C-terminus and form the cytosolic form, GABARAPL2-I. The processed form is then activated by APG7L/ATG7, transferred to ATG3 and conjugated to phosphatidylethanolamine (PE) phospholipid to form the membrane-bound form, GABARAPL2-II. During non-canonical autophagy, the processed form is conjugated to phosphatidylserine (PS) phospholipid. ATG4 proteins also mediate the delipidation of PE-conjugated forms required for GABARAPL2 recycling when autophagosomes fuse with lysosomes. In addition, ATG4B and ATG4D mediate delipidation of ATG8 proteins conjugated to PS during non-canonical autophagy. ATG4B constitutes the major protein for proteolytic activation. ATG4D is the main enzyme for delipidation activity. Post-translationally, phosphorylation at Ser-87 and Ser-88 by TBK1 prevents interaction with ATG4 (ATG4A, ATG4B, ATG4C or ATG4D). Phosphorylation by TBK1 on autophagosomes prevents their delipidation by ATG4 and premature removal from nascent autophagosomes. In terms of tissue distribution, ubiquitous. Expressed at high levels in the brain, heart, prostate, ovary, spleen and skeletal muscle. Expressed at very low levels in lung, thymus and small intestine.

The protein resides in the cytoplasmic vesicle. It localises to the autophagosome. The protein localises to the endoplasmic reticulum membrane. Its subcellular location is the golgi apparatus. Ubiquitin-like modifier involved in intra-Golgi traffic. Modulates intra-Golgi transport through coupling between NSF activity and SNAREs activation. It first stimulates the ATPase activity of NSF which in turn stimulates the association with GOSR1. Involved in autophagy. Plays a role in mitophagy which contributes to regulate mitochondrial quantity and quality by eliminating the mitochondria to a basal level to fulfill cellular energy requirements and preventing excess ROS production. Whereas LC3s are involved in elongation of the phagophore membrane, the GABARAP/GATE-16 subfamily is essential for a later stage in autophagosome maturation. In Bos taurus (Bovine), this protein is Gamma-aminobutyric acid receptor-associated protein-like 2.